Here is a 237-residue protein sequence, read N- to C-terminus: Sugar fermentation stimulation protein homolog (237 aa).

Belongs to the SfsA family.

The protein is Sugar fermentation stimulation protein homolog of Thioalkalivibrio sulfidiphilus (strain HL-EbGR7).